The sequence spans 107 residues: U-scoloptoxin(19)-Sm1a (107 aa).

The signal sequence occupies residues 1 to 20 (MRFLVSVAFLLTVSSLLVSG).

The protein belongs to the scoloptoxin-19 family. Contains 6 disulfide bonds. Expressed by the venom gland.

The protein resides in the secreted. This Scolopendra morsitans (Tanzanian blue ringleg centipede) protein is U-scoloptoxin(19)-Sm1a.